The chain runs to 416 residues: Tyrosine--tRNA ligase (416 aa).

Position 40 (Tyr-40) interacts with L-tyrosine. Residues 45 to 54 (ATAASLHVGH) carry the 'HIGH' region motif. The L-tyrosine site is built by Tyr-177 and Gln-181. The short motif at 237–241 (KMGKS) is the 'KMSKS' region element. ATP is bound at residue Lys-240. Residues 351–416 (LSVTHFLVAA…RKKHKLVRLA (66 aa)) form the S4 RNA-binding domain.

It belongs to the class-I aminoacyl-tRNA synthetase family. TyrS type 1 subfamily. Homodimer.

It is found in the cytoplasm. The enzyme catalyses tRNA(Tyr) + L-tyrosine + ATP = L-tyrosyl-tRNA(Tyr) + AMP + diphosphate + H(+). In terms of biological role, catalyzes the attachment of tyrosine to tRNA(Tyr) in a two-step reaction: tyrosine is first activated by ATP to form Tyr-AMP and then transferred to the acceptor end of tRNA(Tyr). The sequence is that of Tyrosine--tRNA ligase from Cereibacter sphaeroides (strain ATCC 17025 / ATH 2.4.3) (Rhodobacter sphaeroides).